The primary structure comprises 1098 residues: Ran-binding protein 16 (1098 aa).

Belongs to the exportin family. In terms of assembly, binds to nucleoporins and the GTP-bound form of Ran.

It localises to the cytoplasm. The protein resides in the nucleus. Functionally, may function as a nuclear transport receptor. The sequence is that of Ran-binding protein 16 (Ranbp16) from Drosophila melanogaster (Fruit fly).